The following is a 349-amino-acid chain: Putative inosamine-phosphate amidinotransferase 2 (349 aa).

It belongs to the amidinotransferase family.

It catalyses the reaction 1-amino-1-deoxy-scyllo-inositol 4-phosphate + L-arginine = 1-guanidino-1-deoxy-scyllo-inositol 4-phosphate + L-ornithine. It functions in the pathway antibiotic biosynthesis; streptomycin biosynthesis. Functionally, it is not obvious if strB2 participates in streptomycin biosynthesis as an inosamine-phosphate amidinotransferase. Attempt to measure its activity have failed and the nucleophilic cysteine which is the key residue for amidine transfer is not conserved but replaced by a glycine residue. In Streptomyces griseus, this protein is Putative inosamine-phosphate amidinotransferase 2 (strB2).